The primary structure comprises 79 residues: uncharacterized protein (79 aa).

This is an uncharacterized protein from Sulfolobus islandicus filamentous virus (isolate Iceland/Hveragerdi) (SIFV).